A 125-amino-acid polypeptide reads, in one-letter code: MHAPQPITAATGEAGEDRALRYLQARGLAVVSRNYRCKGGEIDLVMRDAAGALVFVEVRARVARSTQRFGGAAASVTPAKQRRLIAAAEDFLARQVEDVPACRFDVIAIDGARIEWMRDAFGVDA.

This sequence belongs to the UPF0102 family.

This Ralstonia pickettii (strain 12J) protein is UPF0102 protein Rpic_3463.